The chain runs to 805 residues: Polyribonucleotide nucleotidyltransferase (805 aa).

Mg(2+) is bound by residues Asp491 and Asp497. Residues 558 to 617 (PRMESMIIDKNKIKNVIGTGGKNVREICEKTGVKIEISQDGTVMIYAVSRDAVEEAKNMI) enclose the KH domain. The region spanning 627–694 (GKVFSGVISE…DKDHVQLSMR (68 aa)) is the S1 motif domain. The tract at residues 702–805 (DLLEHESYSS…GGGNKKPRFF (104 aa)) is disordered.

It belongs to the polyribonucleotide nucleotidyltransferase family. Requires Mg(2+) as cofactor.

The protein localises to the cytoplasm. It carries out the reaction RNA(n+1) + phosphate = RNA(n) + a ribonucleoside 5'-diphosphate. Its function is as follows. Involved in mRNA degradation. Catalyzes the phosphorolysis of single-stranded polyribonucleotides processively in the 3'- to 5'-direction. This chain is Polyribonucleotide nucleotidyltransferase, found in Anaplasma marginale (strain Florida).